A 392-amino-acid polypeptide reads, in one-letter code: MYVHHLFLRDFRNYRRLDLALAPATTLFYGPNAAGKTSLLEAIFYLATTRSPRLSSDRELVRWDAVGEAGTPPFARIAADVERRIGPVRLEVLVQRRADDDGQPLNGAQKLVRIDKRPARAIDLIGQLRVVLFTPTDLTLVDGPPAERRRYLDITLSQLDPHYVRTLAHYQKILLQRNSLLRAWREQRRVPRHVDAELAYWDQELAAAGGYLLAERLRAIVELNDLAGPLYQEMSGGEDRLQIEYAASCDLGTARDAGGLAERLLLAFAAQRSDELARGQTLCGPHRDDLIFTVAGINLGRYGSRGQQRSIALALKIGEAGLMRRRSGEAPVLLLDDVLSELDAQRRAHLLALIHHPDQQTLLTATDLSDFSADFLAAVRRYRVEDGQVFAG.

30–37 (GPNAAGKT) provides a ligand contact to ATP.

The protein belongs to the RecF family.

Its subcellular location is the cytoplasm. In terms of biological role, the RecF protein is involved in DNA metabolism; it is required for DNA replication and normal SOS inducibility. RecF binds preferentially to single-stranded, linear DNA. It also seems to bind ATP. The chain is DNA replication and repair protein RecF from Chloroflexus aurantiacus (strain ATCC 29364 / DSM 637 / Y-400-fl).